A 163-amino-acid polypeptide reads, in one-letter code: ATP synthase subunit b 1 (163 aa).

The helical transmembrane segment at 6–26 (LAELWVAVAFLLFVGILIYVG) threads the bilayer.

It belongs to the ATPase B chain family. In terms of assembly, F-type ATPases have 2 components, F(1) - the catalytic core - and F(0) - the membrane proton channel. F(1) has five subunits: alpha(3), beta(3), gamma(1), delta(1), epsilon(1). F(0) has three main subunits: a(1), b(2) and c(10-14). The alpha and beta chains form an alternating ring which encloses part of the gamma chain. F(1) is attached to F(0) by a central stalk formed by the gamma and epsilon chains, while a peripheral stalk is formed by the delta and b chains.

It is found in the cell inner membrane. In terms of biological role, f(1)F(0) ATP synthase produces ATP from ADP in the presence of a proton or sodium gradient. F-type ATPases consist of two structural domains, F(1) containing the extramembraneous catalytic core and F(0) containing the membrane proton channel, linked together by a central stalk and a peripheral stalk. During catalysis, ATP synthesis in the catalytic domain of F(1) is coupled via a rotary mechanism of the central stalk subunits to proton translocation. Functionally, component of the F(0) channel, it forms part of the peripheral stalk, linking F(1) to F(0). The sequence is that of ATP synthase subunit b 1 from Xanthobacter autotrophicus (strain ATCC BAA-1158 / Py2).